A 344-amino-acid chain; its full sequence is Cyclin-G2 (344 aa).

The segment covering 301–313 has biased composition (acidic residues); the sequence is ESESEDSCEDMSC. The disordered stretch occupies residues 301–320; that stretch reads ESESEDSCEDMSCGEESLSS.

This sequence belongs to the cyclin family. Cyclin G subfamily. High levels in cerebellum, thymus, spleen and prostate. Low levels in skeletal muscle.

It is found in the cytoplasm. Functionally, may play a role in growth regulation and in negative regulation of cell cycle progression. This chain is Cyclin-G2 (CCNG2), found in Homo sapiens (Human).